We begin with the raw amino-acid sequence, 291 residues long: 33 kDa chaperonin (291 aa).

2 disulfides stabilise this stretch: Cys-237-Cys-239 and Cys-270-Cys-273.

The protein belongs to the HSP33 family. Under oxidizing conditions two disulfide bonds are formed involving the reactive cysteines. Under reducing conditions zinc is bound to the reactive cysteines and the protein is inactive.

It is found in the cytoplasm. Redox regulated molecular chaperone. Protects both thermally unfolding and oxidatively damaged proteins from irreversible aggregation. Plays an important role in the bacterial defense system toward oxidative stress. In Bacillus cereus (strain G9842), this protein is 33 kDa chaperonin.